Reading from the N-terminus, the 464-residue chain is ESX-1 secretion system protein EccE1 (464 aa).

A run of 2 helical transmembrane segments spans residues 11–31 (FTTG…AICM) and 34–54 (DLLW…VLTI).

Belongs to the EccE family. Part of the ESX-1 / type VII secretion system (T7SS), which is composed of cytosolic and membrane components. The ESX-1 membrane complex is composed of EccB1, EccCa1, EccCb1, EccD1 and EccE1.

The protein resides in the cell inner membrane. Part of the ESX-1 / type VII specialized secretion system (T7SS), which exports several proteins including EsxA and EsxB. Plays a role in DNA conjugation, in at least a donor strain. This chain is ESX-1 secretion system protein EccE1, found in Mycolicibacterium smegmatis (strain ATCC 700084 / mc(2)155) (Mycobacterium smegmatis).